A 328-amino-acid chain; its full sequence is GTPase Obg 2 (328 aa).

Residues 1 to 139 (MSFRREKFIE…HCVLLKLKIV (139 aa)) enclose the Obg domain. An OBG-type G domain is found at 140–309 (SDVGIIGMPN…LHAQVKKAVV (170 aa)). GTP-binding positions include 146–153 (GMPNAGKS), 171–175 (FTTLE), 192–195 (DIPG), 259–262 (NKCD), and 290–292 (GDE). Residues Ser-153 and Thr-173 each contribute to the Mg(2+) site.

It belongs to the TRAFAC class OBG-HflX-like GTPase superfamily. OBG GTPase family. Monomer. Mg(2+) serves as cofactor.

It localises to the cytoplasm. Its function is as follows. An essential GTPase which binds GTP, GDP and possibly (p)ppGpp with moderate affinity, with high nucleotide exchange rates and a fairly low GTP hydrolysis rate. Plays a role in control of the cell cycle, stress response, ribosome biogenesis and in those bacteria that undergo differentiation, in morphogenesis control. In Anaplasma marginale (strain St. Maries), this protein is GTPase Obg 2.